The primary structure comprises 312 residues: tRNA dimethylallyltransferase (312 aa).

An ATP-binding site is contributed by 17–24 (GPTASGKS). Residue 19–24 (TASGKS) coordinates substrate.

It belongs to the IPP transferase family. As to quaternary structure, monomer. Mg(2+) serves as cofactor.

The enzyme catalyses adenosine(37) in tRNA + dimethylallyl diphosphate = N(6)-dimethylallyladenosine(37) in tRNA + diphosphate. Catalyzes the transfer of a dimethylallyl group onto the adenine at position 37 in tRNAs that read codons beginning with uridine, leading to the formation of N6-(dimethylallyl)adenosine (i(6)A). In Zymomonas mobilis subsp. mobilis (strain ATCC 31821 / ZM4 / CP4), this protein is tRNA dimethylallyltransferase.